The primary structure comprises 280 residues: Energy-coupling factor transporter ATP-binding protein EcfA (280 aa).

The 236-residue stretch at 5–240 (IDVKNLTYKY…DEMLKLTGLE (236 aa)) folds into the ABC transporter domain. 40 to 47 (GHNGSGKS) is an ATP binding site.

The protein belongs to the ABC transporter superfamily. Energy-coupling factor EcfA family. As to quaternary structure, forms a stable energy-coupling factor (ECF) transporter complex composed of 2 membrane-embedded substrate-binding proteins (S component), 2 ATP-binding proteins (A component) and 2 transmembrane proteins (T component).

Its subcellular location is the cell membrane. ATP-binding (A) component of a common energy-coupling factor (ECF) ABC-transporter complex. Unlike classic ABC transporters this ECF transporter provides the energy necessary to transport a number of different substrates. The polypeptide is Energy-coupling factor transporter ATP-binding protein EcfA (Pediococcus pentosaceus (strain ATCC 25745 / CCUG 21536 / LMG 10740 / 183-1w)).